Reading from the N-terminus, the 476-residue chain is Lactate utilization protein B (476 aa).

4Fe-4S ferredoxin-type domains lie at 304–334 and 353–382; these read GTEF…GHSY and YDEY…LHEL. [4Fe-4S] cluster-binding residues include cysteine 313, cysteine 316, cysteine 319, cysteine 323, cysteine 366, cysteine 369, and cysteine 373.

The protein belongs to the LutB/YkgF family.

Its function is as follows. Is involved in L-lactate degradation and allows cells to grow with lactate as the sole carbon source. Has probably a role as an electron transporter during oxidation of L-lactate. This Bacillus velezensis (strain DSM 23117 / BGSC 10A6 / LMG 26770 / FZB42) (Bacillus amyloliquefaciens subsp. plantarum) protein is Lactate utilization protein B.